Here is a 592-residue protein sequence, read N- to C-terminus: V-type ATP synthase alpha chain (592 aa).

233 to 240 (GPFGSGKT) is a binding site for ATP.

This sequence belongs to the ATPase alpha/beta chains family.

The enzyme catalyses ATP + H2O + 4 H(+)(in) = ADP + phosphate + 5 H(+)(out). Functionally, produces ATP from ADP in the presence of a proton gradient across the membrane. The V-type alpha chain is a catalytic subunit. The polypeptide is V-type ATP synthase alpha chain (Clostridium botulinum (strain Loch Maree / Type A3)).